The following is a 138-amino-acid chain: Putative pre-16S rRNA nuclease (138 aa).

It belongs to the YqgF nuclease family.

It is found in the cytoplasm. Functionally, could be a nuclease involved in processing of the 5'-end of pre-16S rRNA. This is Putative pre-16S rRNA nuclease from Geobacillus kaustophilus (strain HTA426).